The sequence spans 427 residues: Glutamate-1-semialdehyde 2,1-aminomutase (427 aa).

An N6-(pyridoxal phosphate)lysine modification is found at Lys267.

It belongs to the class-III pyridoxal-phosphate-dependent aminotransferase family. HemL subfamily. Homodimer. The cofactor is pyridoxal 5'-phosphate.

It is found in the cytoplasm. It carries out the reaction (S)-4-amino-5-oxopentanoate = 5-aminolevulinate. Its pathway is porphyrin-containing compound metabolism; protoporphyrin-IX biosynthesis; 5-aminolevulinate from L-glutamyl-tRNA(Glu): step 2/2. The chain is Glutamate-1-semialdehyde 2,1-aminomutase from Geobacter sulfurreducens (strain ATCC 51573 / DSM 12127 / PCA).